The primary structure comprises 427 residues: Adenylosuccinate synthetase (427 aa).

GTP contacts are provided by residues 12 to 18 (GDEGKGK) and 40 to 42 (GHT). Catalysis depends on aspartate 13, which acts as the Proton acceptor. Mg(2+)-binding residues include aspartate 13 and glycine 40. IMP-binding positions include 13-16 (DEGK), 38-41 (NAGH), threonine 128, arginine 142, glutamine 223, threonine 238, and arginine 302. Residue histidine 41 is the Proton donor of the active site. 298 to 304 (TTTGRPR) provides a ligand contact to substrate. Residues arginine 304, 330 to 332 (KLD), and 412 to 414 (AVG) contribute to the GTP site.

Belongs to the adenylosuccinate synthetase family. As to quaternary structure, homodimer. Mg(2+) serves as cofactor.

The protein resides in the cytoplasm. The catalysed reaction is IMP + L-aspartate + GTP = N(6)-(1,2-dicarboxyethyl)-AMP + GDP + phosphate + 2 H(+). It participates in purine metabolism; AMP biosynthesis via de novo pathway; AMP from IMP: step 1/2. In terms of biological role, plays an important role in the de novo pathway of purine nucleotide biosynthesis. Catalyzes the first committed step in the biosynthesis of AMP from IMP. The polypeptide is Adenylosuccinate synthetase (Heliobacterium modesticaldum (strain ATCC 51547 / Ice1)).